Here is a 531-residue protein sequence, read N- to C-terminus: Outer dynein arm-docking complex subunit 4 (531 aa).

TPR repeat units lie at residues 15-48 (FSTY…QPEE), 50-82 (NCLV…ENDF), and 83-116 (FKGL…RPEF). Positions 161-185 (KQKAQVKVQKKDSKQQKKVDPERSQ) are disordered. Positions 169–185 (QKKDSKQQKKVDPERSQ) are enriched in basic and acidic residues. 5 TPR repeats span residues 275 to 307 (VKSL…VERW), 320 to 353 (GSLH…AEKY), 360 to 393 (SRAL…ANSS), 397 to 430 (TWLY…ADAA), and 437 to 470 (LNAC…ARLL). The segment at 487-531 (KQGMEEQQESEQNNDENDNLRADGNTARDEEEEDVHVQRTEEDEG) is disordered. Positions 492 to 503 (EQQESEQNNDEN) are enriched in acidic residues. Residues 521 to 531 (VHVQRTEEDEG) show a composition bias toward basic and acidic residues.

Component of the outer dynein arm-docking complex. In the mucociliary epithelium, specifically expressed in ciliated cells.

Its subcellular location is the cytoplasm. It localises to the cytoskeleton. The protein localises to the cilium axoneme. Functionally, component of the outer dynein arm-docking complex (ODA-DC) that mediates outer dynein arms (ODA) binding onto the doublet microtubule. Plays an essential role for the assembly of ODA-DC and in the docking of ODA in ciliary axoneme. Required for the docking of the outer dynein arm to cilia, hence plays an essential role in cilia motility. In Xenopus laevis (African clawed frog), this protein is Outer dynein arm-docking complex subunit 4 (odad4).